Here is a 338-residue protein sequence, read N- to C-terminus: Formimidoylglutamase (338 aa).

Residues His137, Asp166, His168, Asp170, Cys259, and Asp261 each contribute to the Mn(2+) site.

Belongs to the arginase family. It depends on Mn(2+) as a cofactor.

It carries out the reaction N-formimidoyl-L-glutamate + H2O = formamide + L-glutamate. It functions in the pathway amino-acid degradation; L-histidine degradation into L-glutamate; L-glutamate from N-formimidoyl-L-glutamate (hydrolase route): step 1/1. Functionally, catalyzes the conversion of N-formimidoyl-L-glutamate to L-glutamate and formamide. The sequence is that of Formimidoylglutamase from Clostridium tetani (strain Massachusetts / E88).